The sequence spans 115 residues: Putative type I restriction enzyme MpnIIP endonuclease subunit middle part (115 aa).

Its function is as follows. The middle section of a putative type I restriction enzyme that if reconstituted might recognize 5'-GAN(7)TAY-3' and cleave a random distance away. Subunit R is required for both nuclease and ATPase activities, but not for modification. This chain is Putative type I restriction enzyme MpnIIP endonuclease subunit middle part, found in Mycoplasma pneumoniae (strain ATCC 29342 / M129 / Subtype 1) (Mycoplasmoides pneumoniae).